Here is an 88-residue protein sequence, read N- to C-terminus: Putative defensin-like protein 256 (88 aa).

The N-terminal stretch at 1 to 25 is a signal peptide; it reads MKSSIFFKLLLLVSLLVVIFRQSYA. Cystine bridges form between cysteine 30–cysteine 46, cysteine 36–cysteine 53, and cysteine 40–cysteine 55.

The protein belongs to the DEFL family.

It localises to the secreted. In Arabidopsis thaliana (Mouse-ear cress), this protein is Putative defensin-like protein 256.